The sequence spans 311 residues: DNA-directed RNA polymerase subunit alpha (311 aa).

The alpha N-terminal domain (alpha-NTD) stretch occupies residues 1–228; that stretch reads MQYQIERIDH…ELFQPLATVT (228 aa). The tract at residues 239 to 311 is alpha C-terminal domain (alpha-CTD); it reads PSPEAQIPLE…ISIPQSRTSV (73 aa).

It belongs to the RNA polymerase alpha chain family. In cyanobacteria the RNAP catalytic core is composed of 2 alpha, 1 beta, 1 beta', 1 gamma and 1 omega subunit. When a sigma factor is associated with the core the holoenzyme is formed, which can initiate transcription.

The enzyme catalyses RNA(n) + a ribonucleoside 5'-triphosphate = RNA(n+1) + diphosphate. DNA-dependent RNA polymerase catalyzes the transcription of DNA into RNA using the four ribonucleoside triphosphates as substrates. The polypeptide is DNA-directed RNA polymerase subunit alpha (Prochlorococcus marinus (strain MIT 9312)).